A 341-amino-acid polypeptide reads, in one-letter code: DNA fragmentation factor subunit beta (341 aa).

One can recognise a CIDE-N domain in the interval 7–83 (KPKTFKLRSL…LLTAGQTWQG (77 aa)).

Heterodimer of DFFA and DFFB. Interacts with H1-1.

Its subcellular location is the cytoplasm. It is found in the nucleus. With respect to regulation, inhibited by DFFA (DFF45). Interacts with HIST1H1A. Nuclease that induces DNA fragmentation and chromatin condensation during apoptosis. Degrades naked DNA and induces apoptotic morphology. This chain is DNA fragmentation factor subunit beta (DFFB), found in Bos taurus (Bovine).